The primary structure comprises 339 residues: Diacylglycerol acyltransferase/mycolyltransferase Ag85A (339 aa).

Positions 1 to 43 are cleaved as a signal peptide; the sequence is MKLVDRFRGAVTGMPRRLMVGAVGAALLSGLVGFVGGSATASA. Residue 85 to 86 participates in substrate binding; sequence MR. The segment at 101-111 is fibronectin-binding; the sequence is FEWYNQSGISV. The cysteines at positions 130 and 135 are disulfide-linked. Substrate-binding residues include serine 169 and aspartate 197. The active-site Nucleophile is the serine 169. The active site involves glutamate 272. Residues 274 to 277, lysine 281, and 304 to 306 contribute to the substrate site; these read FVRT and HDW. Histidine 304 is a catalytic residue.

It belongs to the mycobacterial A85 antigen family. As to quaternary structure, homodimer.

Its subcellular location is the secreted. The protein resides in the cell wall. The protein localises to the cytoplasm. The catalysed reaction is an acyl-CoA + a 1,2-diacyl-sn-glycerol = a triacyl-sn-glycerol + CoA. The enzyme catalyses 2 alpha,alpha'-trehalose 6-mycolate = alpha,alpha'-trehalose 6,6'-bismycolate + alpha,alpha-trehalose. Its function is as follows. The antigen 85 proteins (FbpA, FbpB, FbpC) are responsible for the high affinity of mycobacteria for fibronectin, a large adhesive glycoprotein, which facilitates the attachment of M.tuberculosis to murine alveolar macrophages (AMs). They also help to maintain the integrity of the cell wall by catalyzing the transfer of mycolic acids to cell wall arabinogalactan, and through the synthesis of alpha,alpha-trehalose dimycolate (TDM, cord factor). They catalyze the transfer of a mycoloyl residue from one molecule of alpha,alpha-trehalose monomycolate (TMM) to another TMM, leading to the formation of TDM. FbpA mediates triacylglycerol (TAG) formation with long-chain acyl-CoA as the acyl donor and 1,2-dipalmitoyl-sn-glycerol (1,2-dipalmitin) as the acyl acceptor. It has a preference for C26:0-CoA over C18:1-CoA. The sequence is that of Diacylglycerol acyltransferase/mycolyltransferase Ag85A (fbpA) from Mycobacterium gordonae.